Consider the following 109-residue polypeptide: Probable glutaredoxin slr1562 (109 aa).

Positions 11–109 (LSGRQADGIK…PLLATPPNPA (99 aa)) constitute a Glutaredoxin domain. Cysteines 31 and 34 form a disulfide.

Belongs to the glutaredoxin family.

Its function is as follows. Has a glutathione-disulfide oxidoreductase activity in the presence of NADPH and glutathione reductase. Reduces low molecular weight disulfides and proteins. In Synechocystis sp. (strain ATCC 27184 / PCC 6803 / Kazusa), this protein is Probable glutaredoxin slr1562.